The following is a 640-amino-acid chain: UvrABC system protein C (640 aa).

The GIY-YIG domain occupies 35 to 113; the sequence is DAPGVYRMIG…IKQLKPRFNV (79 aa). The UVR domain maps to 223–258; sequence RAVMATMAKAMEEAAEELEFERAARLRDRIRALSAV.

It belongs to the UvrC family. In terms of assembly, interacts with UvrB in an incision complex.

The protein localises to the cytoplasm. Functionally, the UvrABC repair system catalyzes the recognition and processing of DNA lesions. UvrC both incises the 5' and 3' sides of the lesion. The N-terminal half is responsible for the 3' incision and the C-terminal half is responsible for the 5' incision. The protein is UvrABC system protein C of Caulobacter vibrioides (strain ATCC 19089 / CIP 103742 / CB 15) (Caulobacter crescentus).